We begin with the raw amino-acid sequence, 897 residues long: 3'-5' exonuclease DinG (897 aa).

The Exonuclease domain maps to 8 to 161 (VVDLETTGNQ…DEDAATTAKL (154 aa)). The Helicase ATP-binding domain maps to 241–496 (SKAVDQLGLT…KAIDQLEKQR (256 aa)). 276 to 283 (ASLGSGKS) is a binding site for ATP. The DEAH box motif lies at 448–451 (DEAH). The 191-residue stretch at 703–893 (NIDEYVASIV…QFGKLLRQIQ (191 aa)) folds into the Helicase C-terminal domain.

The protein belongs to the helicase family. DinG subfamily. Type 2 sub-subfamily. In terms of assembly, monomer in solution.

Its activity is regulated as follows. The nuclease activity is inhibited by ATP or ADP. In terms of biological role, 3'-5' exonuclease acting on single-stranded DNA (ssDNA) and RNA (ssRNA) substrates. Displays ssDNA-stimulated ATPase activity, but lacks helicase activity. The sequence is that of 3'-5' exonuclease DinG from Staphylococcus aureus (strain MRSA252).